A 99-amino-acid chain; its full sequence is NADH-quinone oxidoreductase subunit K (99 aa).

The next 3 helical transmembrane spans lie at 3–23, 28–48, and 62–82; these read PENY…GVLL, IVVF…FVTF, and FFTM…IMII.

Belongs to the complex I subunit 4L family. As to quaternary structure, NDH-1 is composed of 14 different subunits. Subunits NuoA, H, J, K, L, M, N constitute the membrane sector of the complex.

Its subcellular location is the cell membrane. It carries out the reaction a quinone + NADH + 5 H(+)(in) = a quinol + NAD(+) + 4 H(+)(out). NDH-1 shuttles electrons from NADH, via FMN and iron-sulfur (Fe-S) centers, to quinones in the respiratory chain. The immediate electron acceptor for the enzyme in this species is believed to be a menaquinone. Couples the redox reaction to proton translocation (for every two electrons transferred, four hydrogen ions are translocated across the cytoplasmic membrane), and thus conserves the redox energy in a proton gradient. This Rhodococcus erythropolis (strain PR4 / NBRC 100887) protein is NADH-quinone oxidoreductase subunit K.